Consider the following 301-residue polypeptide: Sulfate adenylyltransferase subunit 2 1 (301 aa).

This sequence belongs to the PAPS reductase family. CysD subfamily. As to quaternary structure, heterodimer composed of CysD, the smaller subunit, and CysN.

It catalyses the reaction sulfate + ATP + H(+) = adenosine 5'-phosphosulfate + diphosphate. It participates in sulfur metabolism; hydrogen sulfide biosynthesis; sulfite from sulfate: step 1/3. Functionally, with CysN forms the ATP sulfurylase (ATPS) that catalyzes the adenylation of sulfate producing adenosine 5'-phosphosulfate (APS) and diphosphate, the first enzymatic step in sulfur assimilation pathway. APS synthesis involves the formation of a high-energy phosphoric-sulfuric acid anhydride bond driven by GTP hydrolysis by CysN coupled to ATP hydrolysis by CysD. This chain is Sulfate adenylyltransferase subunit 2 1, found in Shewanella sediminis (strain HAW-EB3).